A 60-amino-acid polypeptide reads, in one-letter code: Myrmicitoxin(1)-Pr4c (60 aa).

Residues 1 to 23 form the signal peptide; it reads MKAIIFLFAVLTVVAIIIPIISG. The propeptide occupies 24 to 33; the sequence is EPNAGPHAAS. Position 59 is a glutamine amide (Gln-59).

The protein belongs to the formicidae venom clade 2 family. Expressed by the venom gland.

Its subcellular location is the secreted. Toxin that causes a rapid and irreversible paralysis when intrathoracically injected into insects (blowflies). Does not cause spontaneous nocifensive behaviors by intraplantar injection in mice. This chain is Myrmicitoxin(1)-Pr4c, found in Pogonomyrmex rugosus (Desert harvester ant).